We begin with the raw amino-acid sequence, 239 residues long: Fatty acid metabolism regulator protein (239 aa).

Residues 6 to 74 (QSPAGFAEEY…HGKPTKVNNF (69 aa)) enclose the HTH gntR-type domain. The segment at residues 34-53 (ERELSELIGVTRTTLREVLQ) is a DNA-binding region (H-T-H motif).

As to quaternary structure, homodimer.

Its subcellular location is the cytoplasm. Its function is as follows. Multifunctional regulator of fatty acid metabolism. In Enterobacter sp. (strain 638), this protein is Fatty acid metabolism regulator protein.